The following is a 122-amino-acid chain: Probable transcription factor PqrA (122 aa).

Positions Asn7–Asn107 constitute an HTH araC/xylS-type domain. 2 consecutive DNA-binding regions (H-T-H motif) follow at residues Asp26 to Lys47 and Ile74 to Phe97.

Its function is as follows. Upon expression in E.coli strain KY2563 confers resistance to antibiotics ofloxacin, ciprofloxacin, tetracycline, chloramphenicol, and ceftazidime (increases minimal inhibitory concentration by 8-32 times); also decreases expression of OmpF. The chain is Probable transcription factor PqrA from Proteus vulgaris.